The sequence spans 351 residues: Probable dual-specificity RNA methyltransferase RlmN (351 aa).

The Proton acceptor role is filled by Glu-102. The region spanning 110-339 (DGGRKTICIS…ILNRRSPGKD (230 aa)) is the Radical SAM core domain. Cys-117 and Cys-344 are joined by a disulfide. [4Fe-4S] cluster contacts are provided by Cys-124, Cys-128, and Cys-131. S-adenosyl-L-methionine contacts are provided by residues 171–172 (GE), Ser-203, 226–228 (SLN), and Asn-302. Catalysis depends on Cys-344, which acts as the S-methylcysteine intermediate.

The protein belongs to the radical SAM superfamily. RlmN family. The cofactor is [4Fe-4S] cluster.

It localises to the cytoplasm. It carries out the reaction adenosine(2503) in 23S rRNA + 2 reduced [2Fe-2S]-[ferredoxin] + 2 S-adenosyl-L-methionine = 2-methyladenosine(2503) in 23S rRNA + 5'-deoxyadenosine + L-methionine + 2 oxidized [2Fe-2S]-[ferredoxin] + S-adenosyl-L-homocysteine. The enzyme catalyses adenosine(37) in tRNA + 2 reduced [2Fe-2S]-[ferredoxin] + 2 S-adenosyl-L-methionine = 2-methyladenosine(37) in tRNA + 5'-deoxyadenosine + L-methionine + 2 oxidized [2Fe-2S]-[ferredoxin] + S-adenosyl-L-homocysteine. In terms of biological role, specifically methylates position 2 of adenine 2503 in 23S rRNA and position 2 of adenine 37 in tRNAs. The protein is Probable dual-specificity RNA methyltransferase RlmN of Leptospira borgpetersenii serovar Hardjo-bovis (strain JB197).